Here is a 266-residue protein sequence, read N- to C-terminus: GTP cyclohydrolase FolE2 (266 aa).

This sequence belongs to the GTP cyclohydrolase IV family.

The enzyme catalyses GTP + H2O = 7,8-dihydroneopterin 3'-triphosphate + formate + H(+). It functions in the pathway cofactor biosynthesis; 7,8-dihydroneopterin triphosphate biosynthesis; 7,8-dihydroneopterin triphosphate from GTP: step 1/1. Functionally, converts GTP to 7,8-dihydroneopterin triphosphate. The protein is GTP cyclohydrolase FolE2 of Burkholderia mallei (strain ATCC 23344).